Here is an 804-residue protein sequence, read N- to C-terminus: DNA mismatch repair protein MutS (804 aa).

Residue 614-621 (GPNMAGKS) participates in ATP binding.

This sequence belongs to the DNA mismatch repair MutS family.

Functionally, this protein is involved in the repair of mismatches in DNA. It is possible that it carries out the mismatch recognition step. This protein has a weak ATPase activity. This chain is DNA mismatch repair protein MutS, found in Ehrlichia ruminantium (strain Welgevonden).